The primary structure comprises 811 residues: MSAIARAAARVRQQNTTPLQRPLLLQRKPVLTHTLPLHASPLKPSLATSITSPNFQQSFQRRWASASAKAEEGAKEEVWPQRKLPELTETDKLRLRRQRNVGISAHIDSGKTTLTERVLYYTGRIRDIHEVRGRDAVGAKMDSMELEREKGITIQSAATFADWVAPKPPTELKEGETVGNTDKQKFAINIIDTPGHVDFTIEVERALRVLDGAVLVLCAVSGVQSQTITVDRQMRRYNVPRLAFINKMDRAGSNPFRVIGQLRGKLKMNAAAVQVPIGSESDFAGVVDIVRMKAIYNEGVKGNQIVETDEIPESVRALAEEKRAELIEQLSEADETLCDLFLDEAPITPTDIAQALQRATTSLRFTPVFMGSAIKNTGVQPLLDGVCAYLPNPSEVQNQAMDATLPAHAPTIPLVPATDAPLVGLAFKLEEGRYGQLTYMRVYQGELKRGSMIYNARTGKRVKVPRLVRMHADEMEDVDAVVAGEICAMFGVECSSGDTFTDGSSTYTMTSMFVPEPVISLSIRPEGNETPNFSRALNRFQKEDPTFRVHVDSESQETIISGMGELHLDIYVERMKREYNVACVTGKPRVAFRETITEAAKFNYTHKKQSGGSGQFGRVIGSIEPMETDPDTGKDTAFENRIIGGNIPNQFIPAIQKGFQEALDRGLITGHPITGCKFVLDDGSAHAVDSNELAFRLAAIGAFREAFNKARPVVLEPVMTVEIVAPIEFQGNVIGAINQRKGTIVDTEVRDDEFTLTAEVALNDMFGYSSQLRGMTQGKGEFSMEYKNHQPVLPNIQKEMAEAFRKKQLSK.

The N-terminal 64 residues, 1–64, are a transit peptide targeting the mitochondrion; that stretch reads MSAIARAAAR…FQQSFQRRWA (64 aa). One can recognise a tr-type G domain in the interval 96-394; it reads RRQRNVGISA…GVCAYLPNPS (299 aa). Residues 105-112, 192-196, and 246-249 contribute to the GTP site; these read AHIDSGKT, DTPGH, and NKMD.

It belongs to the TRAFAC class translation factor GTPase superfamily. Classic translation factor GTPase family. EF-G/EF-2 subfamily.

It is found in the mitochondrion. It functions in the pathway protein biosynthesis; polypeptide chain elongation. Mitochondrial GTPase that catalyzes the GTP-dependent ribosomal translocation step during translation elongation. During this step, the ribosome changes from the pre-translocational (PRE) to the post-translocational (POST) state as the newly formed A-site-bound peptidyl-tRNA and P-site-bound deacylated tRNA move to the P and E sites, respectively. Catalyzes the coordinated movement of the two tRNA molecules, the mRNA and conformational changes in the ribosome. The sequence is that of Elongation factor G, mitochondrial from Cryptococcus neoformans var. neoformans serotype D (strain B-3501A) (Filobasidiella neoformans).